Reading from the N-terminus, the 361-residue chain is Peptide chain release factor 1 (361 aa).

The residue at position 235 (Q235) is an N5-methylglutamine.

This sequence belongs to the prokaryotic/mitochondrial release factor family. In terms of processing, methylated by PrmC. Methylation increases the termination efficiency of RF1.

Its subcellular location is the cytoplasm. Functionally, peptide chain release factor 1 directs the termination of translation in response to the peptide chain termination codons UAG and UAA. The polypeptide is Peptide chain release factor 1 (Rhodopseudomonas palustris (strain BisB18)).